The following is a 416-amino-acid chain: MINRRYELFKDVSDADWNDWRWQVRNRIETVEELKKYIPLTKEEEEGVAQCVKSLRMAITPYYLSLIDPNDPNDPVRKQAIPTALELNKAAADLEDPLHEDTDSPVPGLTHRYPDRVLLLITDMCSMYCRHCTRRRFAGQSDDSMPMERIDKAIDYIRNTPQVRDVLLSGGDALLVSDETLEYIIAKLREIPHVEIVRIGSRTPVVLPQRITPELVNMLKKYHPVWLNTHFNHPNEITEESTRACQLLADAGVPLGNQSVLLRGVNDCVHVMKELVNKLVKIRVRPYYIYQCDLSLGLEHFRTPVSKGIEIIEGLRGHTSGYCVPTFVVDAPGGGGKTPVMPNYVISQSHDKVILRNFEGVITTYSEPINYTPGCNCDVCTGKKKVHKVGVAGLLNGEGMALEPVGLERNKRHVQE.

The region spanning 111 to 322 (HRYPDRVLLL…EGLRGHTSGY (212 aa)) is the Radical SAM core domain. Positions 125, 129, and 132 each coordinate [4Fe-4S] cluster. Cysteine 268 contacts Zn(2+). Residue lysine 337 is modified to N6-(pyridoxal phosphate)lysine. The Zn(2+) site is built by cysteine 375, cysteine 377, and cysteine 380.

Belongs to the radical SAM superfamily. KamA family. As to quaternary structure, homohexamer; trimer of dimers. Forms a homotetramer in crystal. [4Fe-4S] cluster serves as cofactor. Pyridoxal 5'-phosphate is required as a cofactor. The cofactor is Co(2+). It depends on Zn(2+) as a cofactor.

It catalyses the reaction L-lysine = (3S)-3,6-diaminohexanoate. The protein operates within amino-acid degradation; L-lysine degradation via acetate pathway. The enzyme is activated by S-adenosyl-methionine. Activity is dependent on the levels of Fe(2+), S(2-) and Co(2+). Activity is stimulated by addition of EDTA. S-adenosylhomocysteine competitively inhibits the activity whereas 5'-methylthioadenosine is not inhibitory in the presence of S-adenosylmethionine. Competitively inhibited by 4-thialysine. Inhibited by sodium borohydride (1 mM) when added with 2 mM dithionate. Moderately inhibited by beta-mercaptoethanol (30 mM) along with dithionate. Higher concentrations of Fe(2+) partially inhibit the activity and Co(2+) at 1 mM is a strong inhibitor. Hydroxylamine, isonicotinic acid hydrazide inhibit effectively, in addition, hydrazine, D-penicillamine and D-cycloserine are also inhibitory at high concentrations. Catalyzes the interconversion of L-alpha-lysine and L-beta-lysine. This Clostridium subterminale protein is L-lysine 2,3-aminomutase (kamA).